We begin with the raw amino-acid sequence, 762 residues long: 5-methyltetrahydropteroyltriglutamate--homocysteine methyltransferase (762 aa).

Residues 17 to 20 (REWK) and lysine 111 contribute to the 5-methyltetrahydropteroyltri-L-glutamate site. Residues 435-437 (IGS) and glutamate 488 contribute to the L-homocysteine site. Residues 435 to 437 (IGS) and glutamate 488 contribute to the L-methionine site. Residues 519–520 (RC) and tryptophan 565 contribute to the 5-methyltetrahydropteroyltri-L-glutamate site. L-homocysteine is bound at residue aspartate 603. Position 603 (aspartate 603) interacts with L-methionine. Glutamate 609 lines the 5-methyltetrahydropteroyltri-L-glutamate pocket. 3 residues coordinate Zn(2+): histidine 645, cysteine 647, and glutamate 669. Histidine 698 serves as the catalytic Proton donor. Cysteine 730 provides a ligand contact to Zn(2+).

This sequence belongs to the vitamin-B12 independent methionine synthase family. It depends on Zn(2+) as a cofactor.

The catalysed reaction is 5-methyltetrahydropteroyltri-L-glutamate + L-homocysteine = tetrahydropteroyltri-L-glutamate + L-methionine. The protein operates within amino-acid biosynthesis; L-methionine biosynthesis via de novo pathway; L-methionine from L-homocysteine (MetE route): step 1/1. Its function is as follows. Catalyzes the transfer of a methyl group from 5-methyltetrahydrofolate to homocysteine resulting in methionine formation. This Bacillus cytotoxicus (strain DSM 22905 / CIP 110041 / 391-98 / NVH 391-98) protein is 5-methyltetrahydropteroyltriglutamate--homocysteine methyltransferase.